A 481-amino-acid chain; its full sequence is Methylenetetrahydrofolate--tRNA-(uracil-5-)-methyltransferase TrmFO (481 aa).

13–18 (GGGLAG) is a binding site for FAD.

The protein belongs to the MnmG family. TrmFO subfamily. The cofactor is FAD.

The protein resides in the cytoplasm. It carries out the reaction uridine(54) in tRNA + (6R)-5,10-methylene-5,6,7,8-tetrahydrofolate + NADH + H(+) = 5-methyluridine(54) in tRNA + (6S)-5,6,7,8-tetrahydrofolate + NAD(+). The enzyme catalyses uridine(54) in tRNA + (6R)-5,10-methylene-5,6,7,8-tetrahydrofolate + NADPH + H(+) = 5-methyluridine(54) in tRNA + (6S)-5,6,7,8-tetrahydrofolate + NADP(+). In terms of biological role, catalyzes the folate-dependent formation of 5-methyl-uridine at position 54 (M-5-U54) in all tRNAs. This is Methylenetetrahydrofolate--tRNA-(uracil-5-)-methyltransferase TrmFO from Agrobacterium fabrum (strain C58 / ATCC 33970) (Agrobacterium tumefaciens (strain C58)).